We begin with the raw amino-acid sequence, 477 residues long: Bifunctional protein HldE (477 aa).

The segment at Met-1–Thr-318 is ribokinase. ATP is bound at residue Asn-195–Glu-198. Asp-264 is a catalytic residue. The cytidylyltransferase stretch occupies residues Met-344–Lys-477.

In the N-terminal section; belongs to the carbohydrate kinase PfkB family. It in the C-terminal section; belongs to the cytidylyltransferase family. As to quaternary structure, homodimer.

The catalysed reaction is D-glycero-beta-D-manno-heptose 7-phosphate + ATP = D-glycero-beta-D-manno-heptose 1,7-bisphosphate + ADP + H(+). The enzyme catalyses D-glycero-beta-D-manno-heptose 1-phosphate + ATP + H(+) = ADP-D-glycero-beta-D-manno-heptose + diphosphate. Its pathway is nucleotide-sugar biosynthesis; ADP-L-glycero-beta-D-manno-heptose biosynthesis; ADP-L-glycero-beta-D-manno-heptose from D-glycero-beta-D-manno-heptose 7-phosphate: step 1/4. It participates in nucleotide-sugar biosynthesis; ADP-L-glycero-beta-D-manno-heptose biosynthesis; ADP-L-glycero-beta-D-manno-heptose from D-glycero-beta-D-manno-heptose 7-phosphate: step 3/4. Functionally, catalyzes the phosphorylation of D-glycero-D-manno-heptose 7-phosphate at the C-1 position to selectively form D-glycero-beta-D-manno-heptose-1,7-bisphosphate. Catalyzes the ADP transfer from ATP to D-glycero-beta-D-manno-heptose 1-phosphate, yielding ADP-D-glycero-beta-D-manno-heptose. The polypeptide is Bifunctional protein HldE (Klebsiella pneumoniae subsp. pneumoniae (strain ATCC 700721 / MGH 78578)).